The chain runs to 304 residues: Killer cell immunoglobulin-like receptor 2DS1 (304 aa).

An N-terminal signal peptide occupies residues Met-1–Pro-21. Topologically, residues His-22–His-245 are extracellular. Ig-like C2-type domains lie at Glu-42 to Ser-107 and Gly-142 to Ser-205. Cys-49 and Cys-100 are disulfide-bonded. N-linked (GlcNAc...) asparagine glycans are attached at residues Asn-67, Asn-84, Asn-144, and Asn-178. The cysteines at positions 149 and 198 are disulfide-linked. The interval Val-220–Gly-239 is disordered. Over residues Asn-223–Gly-239 the composition is skewed to low complexity. A helical transmembrane segment spans residues Val-246–Leu-264. At Leu-265–Ala-304 the chain is on the cytoplasmic side. The segment at Gln-280–Ala-304 is disordered.

This sequence belongs to the immunoglobulin superfamily. Interacts with the adapter protein TYROBP/DAP12; the interaction enhances KIR2DS1 stability at the cell surface. In terms of tissue distribution, expressed by NK cells.

The protein localises to the cell membrane. Receptor on natural killer (NK) cells for some HLA-C alleles such as w6. Does not inhibit the activity of NK cells. This Homo sapiens (Human) protein is Killer cell immunoglobulin-like receptor 2DS1.